Consider the following 478-residue polypeptide: Sugar transporter ERD6-like 15 (478 aa).

12 helical membrane-spanning segments follow: residues 31–51 (FVLAFIVGSCGAFAFGCIIGY), 67–87 (IADYSLFGSILTVGLILGALI), 106–126 (ILFVIGWFAIAFAKGVWLLDL), 129–149 (LLQGISIGISVYLGPVYITEI), 161–181 (FAQLFAGVGISVFYALGTIVA), 185–205 (LAILGCIPSLMVLPLLFFIPE), 267–287 (AFSLTIGVVLIALPQLGGLNG), 305–325 (FGFISTSVVQMFGGILGTVLV), 333–353 (LLLVSQAGMFLGCLTTAISFF), 366–386 (VLALFSVMVYFGSYGSGMGSI), 406–426 (MCNLVSSISAWLVAYSFSYLL), and 432–452 (GTFLMFATVAGLGFVFIAKLV).

The protein belongs to the major facilitator superfamily. Sugar transporter (TC 2.A.1.1) family.

The protein resides in the membrane. In terms of biological role, sugar transporter. This chain is Sugar transporter ERD6-like 15, found in Arabidopsis thaliana (Mouse-ear cress).